The chain runs to 250 residues: tRNA pseudouridine synthase A (250 aa).

The Nucleophile role is filled by Asp-52. Tyr-110 contacts substrate.

The protein belongs to the tRNA pseudouridine synthase TruA family. In terms of assembly, homodimer.

The catalysed reaction is uridine(38/39/40) in tRNA = pseudouridine(38/39/40) in tRNA. Formation of pseudouridine at positions 38, 39 and 40 in the anticodon stem and loop of transfer RNAs. The protein is tRNA pseudouridine synthase A of Citrifermentans bemidjiense (strain ATCC BAA-1014 / DSM 16622 / JCM 12645 / Bem) (Geobacter bemidjiensis).